A 355-amino-acid chain; its full sequence is UDP-N-acetylglucosamine--N-acetylmuramyl-(pentapeptide) pyrophosphoryl-undecaprenol N-acetylglucosamine transferase (355 aa).

Residues 15-17 (TGG), Asn-127, Arg-163, Ser-191, Ile-244, 263-268 (ALTVSE), and Gln-288 each bind UDP-N-acetyl-alpha-D-glucosamine.

It belongs to the glycosyltransferase 28 family. MurG subfamily.

The protein localises to the cell inner membrane. It carries out the reaction di-trans,octa-cis-undecaprenyl diphospho-N-acetyl-alpha-D-muramoyl-L-alanyl-D-glutamyl-meso-2,6-diaminopimeloyl-D-alanyl-D-alanine + UDP-N-acetyl-alpha-D-glucosamine = di-trans,octa-cis-undecaprenyl diphospho-[N-acetyl-alpha-D-glucosaminyl-(1-&gt;4)]-N-acetyl-alpha-D-muramoyl-L-alanyl-D-glutamyl-meso-2,6-diaminopimeloyl-D-alanyl-D-alanine + UDP + H(+). It functions in the pathway cell wall biogenesis; peptidoglycan biosynthesis. Its function is as follows. Cell wall formation. Catalyzes the transfer of a GlcNAc subunit on undecaprenyl-pyrophosphoryl-MurNAc-pentapeptide (lipid intermediate I) to form undecaprenyl-pyrophosphoryl-MurNAc-(pentapeptide)GlcNAc (lipid intermediate II). The sequence is that of UDP-N-acetylglucosamine--N-acetylmuramyl-(pentapeptide) pyrophosphoryl-undecaprenol N-acetylglucosamine transferase from Salmonella enteritidis PT4 (strain P125109).